Consider the following 334-residue polypeptide: Ketol-acid reductoisomerase (NADP(+)) (334 aa).

The KARI N-terminal Rossmann domain occupies 1–181; sequence MNIYYDKNAD…GGGRTGILET (181 aa). Residues 24 to 27, R47, S50, S52, and 82 to 85 each bind NADP(+); these read YGSQ and DEFQ. H107 is a catalytic residue. G133 contributes to the NADP(+) binding site. Residues 182–323 enclose the KARI C-terminal knotted domain; sequence SFKDETETDL…ESLRSMMPWI (142 aa). 4 residues coordinate Mg(2+): D190, E194, E226, and E230. S251 provides a ligand contact to substrate.

It belongs to the ketol-acid reductoisomerase family. The cofactor is Mg(2+).

It catalyses the reaction (2R)-2,3-dihydroxy-3-methylbutanoate + NADP(+) = (2S)-2-acetolactate + NADPH + H(+). The catalysed reaction is (2R,3R)-2,3-dihydroxy-3-methylpentanoate + NADP(+) = (S)-2-ethyl-2-hydroxy-3-oxobutanoate + NADPH + H(+). It functions in the pathway amino-acid biosynthesis; L-isoleucine biosynthesis; L-isoleucine from 2-oxobutanoate: step 2/4. It participates in amino-acid biosynthesis; L-valine biosynthesis; L-valine from pyruvate: step 2/4. Involved in the biosynthesis of branched-chain amino acids (BCAA). Catalyzes an alkyl-migration followed by a ketol-acid reduction of (S)-2-acetolactate (S2AL) to yield (R)-2,3-dihydroxy-isovalerate. In the isomerase reaction, S2AL is rearranged via a Mg-dependent methyl migration to produce 3-hydroxy-3-methyl-2-ketobutyrate (HMKB). In the reductase reaction, this 2-ketoacid undergoes a metal-dependent reduction by NADPH to yield (R)-2,3-dihydroxy-isovalerate. The protein is Ketol-acid reductoisomerase (NADP(+)) of Vesicomyosocius okutanii subsp. Calyptogena okutanii (strain HA).